A 296-amino-acid chain; its full sequence is Complex I intermediate-associated protein 30, mitochondrial (296 aa).

The transit peptide at 1–29 (MNSLLRQGLRLGCCLPAVQQQIHTTAVHR) directs the protein to the mitochondrion.

The protein belongs to the CIA30 family. Associates with mitochondrial complex I assembly intermediates during its biogenesis.

It is found in the mitochondrion. Its function is as follows. Chaperone protein involved in the assembly of the mitochondrial NADH:ubiquinone oxidoreductase complex (complex I). This Drosophila melanogaster (Fruit fly) protein is Complex I intermediate-associated protein 30, mitochondrial.